A 238-amino-acid chain; its full sequence is Large ribosomal subunit protein uL1 (238 aa).

The protein belongs to the universal ribosomal protein uL1 family. As to quaternary structure, part of the 50S ribosomal subunit.

In terms of biological role, binds directly to 23S rRNA. The L1 stalk is quite mobile in the ribosome, and is involved in E site tRNA release. Protein L1 is also a translational repressor protein, it controls the translation of the L11 operon by binding to its mRNA. The sequence is that of Large ribosomal subunit protein uL1 from Rickettsia prowazekii (strain Madrid E).